The sequence spans 156 residues: Small ribosomal subunit protein uS7 (156 aa).

This sequence belongs to the universal ribosomal protein uS7 family. Part of the 30S ribosomal subunit. Contacts proteins S9 and S11.

Functionally, one of the primary rRNA binding proteins, it binds directly to 16S rRNA where it nucleates assembly of the head domain of the 30S subunit. Is located at the subunit interface close to the decoding center, probably blocks exit of the E-site tRNA. This chain is Small ribosomal subunit protein uS7, found in Aromatoleum aromaticum (strain DSM 19018 / LMG 30748 / EbN1) (Azoarcus sp. (strain EbN1)).